The sequence spans 205 residues: Imidazole glycerol phosphate synthase subunit HisH (205 aa).

The 203-residue stretch at 3–205 folds into the Glutamine amidotransferase type-1 domain; it reads KIGLIDYGMG…LLRRWIKSIQ (203 aa). The active-site Nucleophile is Cys-81. Residues His-185 and Glu-187 contribute to the active site.

In terms of assembly, heterodimer of HisH and HisF.

The protein resides in the cytoplasm. It carries out the reaction 5-[(5-phospho-1-deoxy-D-ribulos-1-ylimino)methylamino]-1-(5-phospho-beta-D-ribosyl)imidazole-4-carboxamide + L-glutamine = D-erythro-1-(imidazol-4-yl)glycerol 3-phosphate + 5-amino-1-(5-phospho-beta-D-ribosyl)imidazole-4-carboxamide + L-glutamate + H(+). The enzyme catalyses L-glutamine + H2O = L-glutamate + NH4(+). It participates in amino-acid biosynthesis; L-histidine biosynthesis; L-histidine from 5-phospho-alpha-D-ribose 1-diphosphate: step 5/9. Functionally, IGPS catalyzes the conversion of PRFAR and glutamine to IGP, AICAR and glutamate. The HisH subunit catalyzes the hydrolysis of glutamine to glutamate and ammonia as part of the synthesis of IGP and AICAR. The resulting ammonia molecule is channeled to the active site of HisF. This chain is Imidazole glycerol phosphate synthase subunit HisH, found in Prochlorococcus marinus subsp. pastoris (strain CCMP1986 / NIES-2087 / MED4).